The chain runs to 381 residues: Cytochrome b (381 aa).

Helical transmembrane passes span 34–54 (FGSL…FLAM), 78–99 (WLIR…YFHI), 114–134 (WNIG…GYVL), and 179–199 (FFAF…IHIL). Residues histidine 84 and histidine 98 each coordinate heme b. 2 residues coordinate heme b: histidine 183 and histidine 197. Histidine 202 contributes to the a ubiquinone binding site. A run of 4 helical transmembrane segments spans residues 227–247 (YKDA…ALFL), 289–309 (LGGV…PFLH), 321–341 (LTQV…WIGG), and 348–368 (FILI…IAIP).

Belongs to the cytochrome b family. The cytochrome bc1 complex contains 3 respiratory subunits (MT-CYB, CYC1 and UQCRFS1), 2 core proteins (UQCRC1 and UQCRC2) and probably 6 low-molecular weight proteins. Heme b is required as a cofactor.

It is found in the mitochondrion inner membrane. Component of the ubiquinol-cytochrome c reductase complex (complex III or cytochrome b-c1 complex) that is part of the mitochondrial respiratory chain. The b-c1 complex mediates electron transfer from ubiquinol to cytochrome c. Contributes to the generation of a proton gradient across the mitochondrial membrane that is then used for ATP synthesis. The chain is Cytochrome b (mt-cyb) from Carcharodon carcharias (Great white shark).